The sequence spans 198 residues: Ribonuclease HII (198 aa).

The RNase H type-2 domain occupies 14–198 (GVIAGVDEVG…KNFAPISRAL (185 aa)). A divalent metal cation-binding residues include D20, E21, and D112.

It belongs to the RNase HII family. Mn(2+) serves as cofactor. Mg(2+) is required as a cofactor.

The protein localises to the cytoplasm. The catalysed reaction is Endonucleolytic cleavage to 5'-phosphomonoester.. In terms of biological role, endonuclease that specifically degrades the RNA of RNA-DNA hybrids. This chain is Ribonuclease HII, found in Wolbachia pipientis wMel.